The primary structure comprises 574 residues: Zinc finger protein 394 (574 aa).

A Phosphoserine modification is found at Ser-12. Lys-40 participates in a covalent cross-link: Glycyl lysine isopeptide (Lys-Gly) (interchain with G-Cter in SUMO2). One can recognise an SCAN box domain in the interval 64–146; that stretch reads RLHFRQLRYQ…AVVRALQRAL (83 aa). The region spanning 155–230 is the KRAB domain; it reads VTFEDMAVSL…LQEAFQGKHP (76 aa). Positions 182–202 are disordered; the sequence is ESAQKDSGSTVPPSLESRVEN. Residues Lys-203, Lys-228, and Lys-254 each participate in a glycyl lysine isopeptide (Lys-Gly) (interchain with G-Cter in SUMO2) cross-link. Residues 231–284 are disordered; it reads LFSKCGSTHEDRVEKQSGNPLPLKLENSAEAEGLNSISDVNKNGSIEGEDSKNN. The span at 265 to 274 shows a compositional bias: polar residues; it reads NSISDVNKNG. A Glycyl lysine isopeptide (Lys-Gly) (interchain with G-Cter in SUMO2) cross-link involves residue Lys-282. 7 consecutive C2H2-type zinc fingers follow at residues 358 to 380, 386 to 408, 414 to 436, 442 to 463, 469 to 491, 497 to 519, and 525 to 547; these read YKCGNCGKSFKQRSDLFRHQRIH, YGCQECGKSFSQSAALTKHQRTH, YTCLKCGERFRQNSHLNRHQSTH, FKCEECGETCRISNLFRHQRLH, YKCEECKKSFKQRSDLFKHHRIH, YGCSVCGKRFNQSATLIKHQRIH, and YKCLECGERFRQSTHLIRHQRIH. Lys-443 participates in a covalent cross-link: Glycyl lysine isopeptide (Lys-Gly) (interchain with G-Cter in SUMO2).

This sequence belongs to the krueppel C2H2-type zinc-finger protein family.

It is found in the nucleus. Its function is as follows. May be involved in transcriptional regulation. This Pongo abelii (Sumatran orangutan) protein is Zinc finger protein 394 (ZNF394).